The sequence spans 171 residues: Glucagon family neuropeptides (171 aa).

A signal peptide spans 1-22 (MYRKALLVWLLVYGIMRCTVHS). Positions 23-76 (SPTALKYPALRLEDEVYDEDGNTLPDFAFDNNPIGIGNPASVFDDMYSFYYPAE) are excised as a propeptide. The tract at residues 145–153 (VKKYLAAVL) is important for receptor binding. Lysine 164 is modified (lysine amide). A propeptide spanning residues 168 to 171 (VAYL) is cleaved from the precursor.

It belongs to the glucagon family.

Its subcellular location is the secreted. Its function is as follows. Primary role of GRF is to release GH from the pituitary. In terms of biological role, PACAP is a neuropeptide involved in diverse array of physiological processes through activating the PACAP subfamily of class B1 G protein-coupled receptors: VIP receptor 1 (VIPR1), VIP receptor 2 (VIPR2), and PACAP type I receptor (ADCYAP1R1). Exerts neuroprotective and general cytoprotective effects due to anti-apoptotic, anti-inflammatory, and antioxidant actions. The chain is Glucagon family neuropeptides (adcyap1) from Pelophylax ridibundus (Marsh frog).